Reading from the N-terminus, the 495-residue chain is Probable lysine-specific demethylase 4A (495 aa).

Positions Ile-18–Arg-60 constitute a JmjN domain. Position 139 (Tyr-139) interacts with 2-oxoglutarate. The JmjC domain maps to Asp-149 to Cys-315. Fe cation is bound by residues His-195 and Glu-197. 2-oxoglutarate is bound by residues Asn-205 and Lys-213. Zn(2+)-binding residues include Cys-241 and His-247. Lys-248 serves as a coordination point for 2-oxoglutarate. His-283 lines the Fe cation pocket. Residues Cys-313 and Cys-315 each contribute to the Zn(2+) site. Ser-409 is subject to Phosphoserine.

It belongs to the JHDM3 histone demethylase family. Fe(2+) serves as cofactor.

It is found in the nucleus. It catalyses the reaction N(6),N(6),N(6)-trimethyl-L-lysyl(9)-[histone H3] + 2 2-oxoglutarate + 2 O2 = N(6)-methyl-L-lysyl(9)-[histone H3] + 2 formaldehyde + 2 succinate + 2 CO2. The catalysed reaction is N(6),N(6),N(6)-trimethyl-L-lysyl(36)-[histone H3] + 2 2-oxoglutarate + 2 O2 = N(6)-methyl-L-lysyl(36)-[histone H3] + 2 formaldehyde + 2 succinate + 2 CO2. Functionally, probable histone demethylase that specifically demethylates 'Lys-9' and 'Lys-36' residues of histone H3, thereby playing a central role in histone code. Demethylation of Lys residue generates formaldehyde and succinate. The polypeptide is Probable lysine-specific demethylase 4A (Kdm4A) (Drosophila melanogaster (Fruit fly)).